A 352-amino-acid chain; its full sequence is Popeye domain-containing protein 1 (352 aa).

At 1 to 38 the chain is on the extracellular side; the sequence is MSNTTSALPSSVPAVSLDPNATLCQDWEQSHHLLFHLA. N-linked (GlcNAc...) asparagine glycosylation is found at asparagine 3 and asparagine 20. The helical transmembrane segment at 39-59 threads the bilayer; sequence NLSLGLGFLIPTTLALHMIFL. Position 60 (arginine 60) is a topological domain, cytoplasmic. Residues 61–81 traverse the membrane as a helical segment; that stretch reads LLLMTGCSLFIAWATLYRCTL. A topological domain (extracellular) is located at residue aspartate 82. Residues 83 to 103 form a helical membrane-spanning segment; the sequence is VMVWNVVFLLVNFMHFFFLLY. The Cytoplasmic segment spans residues 104 to 352; sequence KRRPIKIDRE…NVSKTTKKDI (249 aa). A disordered region spans residues 299–352; the sequence is ILRGGSTGSSLQKNPLTKTSTTMKPIEEGLEDDVFESESPTTSQNVSKTTKKDI. Composition is skewed to polar residues over residues 306 to 321 and 336 to 346; these read GSSL…STTM and ESPTTSQNVSK.

Belongs to the popeye family. In terms of tissue distribution, expressed in skeletal muscle (at protein level).

It localises to the lateral cell membrane. The protein resides in the cell junction. Its subcellular location is the tight junction. The protein localises to the membrane. It is found in the cell membrane. It localises to the sarcolemma. The protein resides in the caveola. In terms of biological role, cell adhesion molecule involved in the establishment and/or maintenance of cell integrity. Involved in skeletal muscle and heart development as well as in the maintenance of heart function. May play a role in vamp3-mediated vesicular transport and recycling of receptor molecules. Involved in the formation and regulation of the tight junction (TJ) paracellular permeability barrier in epithelial cells. May induce primordial adhesive contact and aggregation of epithelial cells in a Ca(2+)-independent manner. May be involved in epithelial movement during corneal sheet formation and regeneration. May play a role in the regulation of cell shape and movement by modulating the Rho-GTPase activity. May also be involved in striated muscle regeneration and in the regulation of cell spreading. In Danio rerio (Zebrafish), this protein is Popeye domain-containing protein 1 (popdc1).